We begin with the raw amino-acid sequence, 973 residues long: Microtubule-associated protein 1S (973 aa).

The tract at residues 1-716 is necessary for the microtubule-organizing center localization; the sequence is MAAVMAAPEA…SESLPTLSDS (716 aa). Disordered stretches follow at residues 452–538 and 560–853; these read HDLE…GPRA and LESE…SGRP. Residues 459–468 show a composition bias toward polar residues; the sequence is RANSQDSLAS. Ser462 is subject to Phosphoserine. Residues 490–506 show a composition bias toward basic and acidic residues; that stretch reads VRREPALATRDQKKDTR. Residues 565 to 582 are compositionally biased toward pro residues; it reads PPAPSPTLSPAQSPPPTA. Phosphoserine is present on residues Ser586, Ser591, and Ser593. The tract at residues 601–973 is necessary for interaction with RASSF1; it reads PDASPSATTP…EAFPACKVEF (373 aa). The span at 603 to 621 shows a compositional bias: low complexity; sequence ASPSATTPTLTTPSLPAEL. A necessary for association with microtubules region spans residues 645 to 880; that stretch reads DPGLSLPLRL…GGGAGHLDQN (236 aa). Phosphoserine occurs at positions 660 and 684. Residues 703–722 are compositionally biased toward low complexity; the sequence is PTSVSESLPTLSDSDPVPVA. Ser724 is modified (phosphoserine). Residues 736–749 show a composition bias toward pro residues; it reads DPPPTPRVPPPLPD. Residues 782-801 show a composition bias toward low complexity; it reads ARPSSASATPRAATVAAKTK. The necessary for association with actin stretch occupies residues 875 to 973; it reads GHLDQNFFLR…EAFPACKVEF (99 aa). The tract at residues 881–905 is necessary for the mitochondrial aggregation and genome destruction; sequence FFLRVRALCYVISGQGQRQEEGLRA.

It belongs to the MAP1 family. As to quaternary structure, heterodimer of a heavy and a light chain. Interacts with microtubules and actin. Both MAP1S heavy and light chains interact with microtubules. MAP1S light chain interacts with actin. Interacts with ESR1, LRPPRC, RASSF1, microtubules and VCY2. Interacts with WDR47 (via N-terminus of light chain). Interacts (via C-terminus) with GAN (via Kelch domains). In terms of tissue distribution, expressed in ventral and dorsal horns of the spinal cord, hippocampus, cerebral cortex, molecular, Purkinje and granular cell layers of the cerebellum and in dorsal root ganglia of the PNS (at protein level). Expressed in brain, testis, heart, lung, kidney and liver.

Its subcellular location is the nucleus. The protein localises to the cytoplasm. It is found in the cytosol. The protein resides in the cytoskeleton. It localises to the spindle. Functionally, microtubule-associated protein that mediates aggregation of mitochondria resulting in cell death and genomic destruction (MAGD). Plays a role in anchoring the microtubule organizing center to the centrosomes. Binds to DNA. Plays a role in apoptosis. Involved in the formation of microtubule bundles. The polypeptide is Microtubule-associated protein 1S (Map1s) (Mus musculus (Mouse)).